Here is a 211-residue protein sequence, read N- to C-terminus: tRNA (guanine-N(7)-)-methyltransferase (211 aa).

Residues Glu43, Asp68, Asn95, and Asn117 each coordinate S-adenosyl-L-methionine. Residues Lys121, Asp153, and 190–193 each bind substrate; that span reads TEYE.

Belongs to the class I-like SAM-binding methyltransferase superfamily. TrmB family.

The enzyme catalyses guanosine(46) in tRNA + S-adenosyl-L-methionine = N(7)-methylguanosine(46) in tRNA + S-adenosyl-L-homocysteine. Its pathway is tRNA modification; N(7)-methylguanine-tRNA biosynthesis. Functionally, catalyzes the formation of N(7)-methylguanine at position 46 (m7G46) in tRNA. The chain is tRNA (guanine-N(7)-)-methyltransferase from Clostridium kluyveri (strain ATCC 8527 / DSM 555 / NBRC 12016 / NCIMB 10680 / K1).